The sequence spans 446 residues: tRNA modification GTPase MnmE (446 aa).

The (6S)-5-formyl-5,6,7,8-tetrahydrofolate site is built by arginine 24, glutamate 81, and lysine 120. The TrmE-type G domain occupies 216-368; sequence GLHAVLIGPP…LHIRLRELAL (153 aa). Asparagine 226 contacts K(+). GTP-binding positions include 226-231, 245-251, and 270-273; these read NAGKSS, TDVAGTT, and DTAG. Serine 230 contacts Mg(2+). Residues threonine 245, valine 247, and threonine 250 each contribute to the K(+) site. Position 251 (threonine 251) interacts with Mg(2+). Lysine 446 lines the (6S)-5-formyl-5,6,7,8-tetrahydrofolate pocket.

This sequence belongs to the TRAFAC class TrmE-Era-EngA-EngB-Septin-like GTPase superfamily. TrmE GTPase family. In terms of assembly, homodimer. Heterotetramer of two MnmE and two MnmG subunits. K(+) is required as a cofactor.

The protein localises to the cytoplasm. Its function is as follows. Exhibits a very high intrinsic GTPase hydrolysis rate. Involved in the addition of a carboxymethylaminomethyl (cmnm) group at the wobble position (U34) of certain tRNAs, forming tRNA-cmnm(5)s(2)U34. The sequence is that of tRNA modification GTPase MnmE from Xanthomonas oryzae pv. oryzae (strain PXO99A).